An 849-amino-acid polypeptide reads, in one-letter code: Cytosolic phospholipase A2 zeta (849 aa).

The region spanning 27 to 145 (EKRGPLWRHW…KCGQPHKHTF (119 aa)) is the C2 domain. The Ca(2+) site is built by Asp-60, Asp-66, Asp-116, Asp-118, and Asp-123. Positions 306-849 (EMSSGDLDLR…RHQARERAGA (544 aa)) constitute a PLA2c domain. Ser-395 serves as the catalytic Nucleophile. The active-site Proton acceptor is the Asp-680.

Requires Ca(2+) as cofactor. As to expression, expressed in myocardium (at protein level).

Its subcellular location is the cytoplasm. The protein resides in the cytosol. It is found in the cell membrane. It localises to the mitochondrion. It catalyses the reaction a 1,2-diacyl-sn-glycero-3-phosphocholine + H2O = a 1-acyl-sn-glycero-3-phosphocholine + a fatty acid + H(+). The enzyme catalyses a 1-O-alkyl-2-acyl-sn-glycero-3-phosphocholine + H2O = a 1-O-alkyl-sn-glycero-3-phosphocholine + a fatty acid + H(+). It carries out the reaction 1-hexadecanoyl-2-(9Z-octadecenoyl)-sn-glycero-3-phosphocholine + H2O = 2-(9Z-octadecenoyl)-sn-glycero-3-phosphocholine + hexadecanoate + H(+). The catalysed reaction is 1-hexadecanoyl-2-(9Z,12Z-octadecadienoyl)-sn-glycero-3-phosphocholine + H2O = (9Z,12Z)-octadecadienoate + 1-hexadecanoyl-sn-glycero-3-phosphocholine + H(+). It catalyses the reaction 1-hexadecanoyl-2-(5Z,8Z,11Z,14Z-eicosatetraenoyl)-sn-glycero-3-phosphocholine + H2O = 1-hexadecanoyl-sn-glycero-3-phosphocholine + (5Z,8Z,11Z,14Z)-eicosatetraenoate + H(+). The enzyme catalyses 1-hexadecanoyl-2-(9Z,12Z-octadecadienoyl)-sn-glycero-3-phosphoethanolamine + H2O = 1-hexadecanoyl-sn-glycero-3-phosphoethanolamine + (9Z,12Z)-octadecadienoate + H(+). It carries out the reaction 1-hexadecanoyl-2-(5Z,8Z,11Z,14Z-eicosatetraenoyl)-sn-glycero-3-phosphoethanolamine + H2O = 1-hexadecanoyl-sn-glycero-3-phosphoethanolamine + (5Z,8Z,11Z,14Z)-eicosatetraenoate + H(+). The catalysed reaction is 1-(5Z,8Z,11Z,14Z-eicosatetraenoyl)-2-O-hexadecyl-sn-glycero-3-phosphocholine + H2O = 2-O-hexadecyl-sn-glycero-3-phosphocholine + (5Z,8Z,11Z,14Z)-eicosatetraenoate + H(+). It catalyses the reaction 1-O-hexadecyl-2-(5Z,8Z,11Z,14Z)-eicosatetraenoyl-sn-glycero-3-phosphocholine + H2O = 1-O-hexadecyl-sn-glycero-3-phosphocholine + (5Z,8Z,11Z,14Z)-eicosatetraenoate + H(+). The enzyme catalyses 1-hexadecanoyl-sn-glycero-3-phosphocholine + H2O = sn-glycerol 3-phosphocholine + hexadecanoate + H(+). Stimulated by cytosolic Ca(2+). In terms of biological role, has calcium-dependent phospholipase and lysophospholipase activities with a potential role in membrane lipid remodeling and biosynthesis of lipid mediators. Preferentially hydrolyzes the ester bond of the fatty acyl group attached at sn-2 position of phospholipids (phospholipase A2 activity). Selectively hydrolyzes sn-2 arachidonoyl group from membrane phospholipids, providing the precursor for eicosanoid biosynthesis. In myocardial mitochondria, plays a major role in arachidonate release that is metabolically channeled to the formation of cardioprotective eicosanoids, epoxyeicosatrienoates (EETs). This chain is Cytosolic phospholipase A2 zeta (PLA2G4F), found in Homo sapiens (Human).